A 1089-amino-acid chain; its full sequence is Electroneutral sodium bicarbonate exchanger 1 (1089 aa).

At 1 to 476 (MPAGSNEPDG…DYRDALSLQC (476 aa)) the chain is on the extracellular side. The disordered stretch occupies residues 55–90 (LGRQSHRHHRTHGQKHRRRGGRGKGASQGEEGLEAL). A compositionally biased stretch (basic residues) spans 58-76 (QSHRHHRTHGQKHRRRGGR). The helical transmembrane segment at 477–497 (LASFLFLYCACMSPVITFGGL) threads the bilayer. Over 498–505 (LGEATEGR) the chain is Cytoplasmic. A helical transmembrane segment spans residues 506–526 (ISAIESLFGASMTGIAYSLFA). Topologically, residues 527–563 (GQPLTILGSTGPVLVFEKILFKFCKDYALSYLSLRAL) are extracellular. The chain crosses the membrane as a helical span at residues 564-584 (IGLWTAFLCIVLVATDASSLV). Residues 585–593 (CYITRFTEE) are Cytoplasmic-facing. Residues 594–614 (AFASLICIIFIYEAIEKLIHL) traverse the membrane as a helical segment. At 615-685 (AETYPIHMHS…EFMGSACGHH (71 aa)) the chain is on the extracellular side. 2 disulfides stabilise this stretch: C634/C682 and C636/C670. An N-linked (GlcNAc) asparagine glycan is attached at N644. The helical transmembrane segment at 686-706 (GPYTPDVLFWSCILFFATFIV) threads the bilayer. Topologically, residues 707-729 (SSTLKTFKTSRYFPTRVRSMVSD) are cytoplasmic. Residues 730–750 (FAVFLTIFTMVVLDFLIGVPS) form a helical membrane-spanning segment. Residues 751–776 (PKLQVPNVFKPTRDDRGWFINPIGPN) are Extracellular-facing. The chain crosses the membrane as a helical span at residues 777–797 (PWWTVIAAIIPALLCTILIFM). Over 798–822 (DQQITAVIINRKEHKLKKGCGYHLD) the chain is Cytoplasmic. The helical transmembrane segment at 823-843 (LLMVAVMLGVCSIMGLPWFVA) threads the bilayer. Over 844–879 (ATVLSITHVNSLKLESECSAPGEQPKFLGIREQRVT) the chain is Extracellular. Residues 880-900 (GLMIFVLMGCSVFMTAVLKFI) traverse the membrane as a helical segment. Over 901–902 (PM) the chain is Cytoplasmic. A helical membrane pass occupies residues 903–923 (PVLYGVFLYMGVSSLQGIQFF). Residues 924 to 960 (DRLKLFGMPAKHQPDFIYLRHVPLRKVHLFTLVQLTC) lie on the Extracellular side of the membrane. A helical transmembrane segment spans residues 961–981 (LVLLWVIKASPAAIVFPMMVL). Residues 982-1089 (ALVFVRKVMD…GNTKEKSPFN (108 aa)) lie on the Cytoplasmic side of the membrane.

It belongs to the anion exchanger (TC 2.A.31) family. In terms of assembly, homodimer. As to expression, expressed in the hippocampal neurons (at protein level). Highly expressed in brain with lower levels in lung, kidney and heart. In the kidney, there is high expression in the inner medulla, localized to the inner medullary collecting duct. In the brain, there seems to be three transcripts each having a different expression pattern. The smaller 3kb transcript has highest expression levels in the thalamus and the largest 9.5kb transcript has highest levels in the substantia nigra. The middle transcript of 4.4kb, which is also the main transcript in kidney, is highly expressed in thalamus. Hence, the highest levels are observed in the thalamus, amygdala and caudate nucleus and very low expression was seen in the corpus callosum.

The protein localises to the cell membrane. It is found in the apical cell membrane. The protein resides in the basolateral cell membrane. It localises to the cytoplasmic vesicle. Its subcellular location is the secretory vesicle. The protein localises to the synaptic vesicle membrane. The catalysed reaction is 2 hydrogencarbonate(out) + chloride(in) + Na(+)(out) = 2 hydrogencarbonate(in) + chloride(out) + Na(+)(in). Functionally, mediates electroneutral sodium- and carbonate-dependent chloride-HCO3(-) exchange with a Na(+):HCO3(-) stoichiometry of 2:1. Plays a major role in pH regulation in neurons. Mediates sodium reabsorption in the renal cortical collecting ducts. The sequence is that of Electroneutral sodium bicarbonate exchanger 1 from Mus musculus (Mouse).